The following is a 284-amino-acid chain: Pantothenate synthetase (284 aa).

30 to 37 (MGNLHDGH) is an ATP binding site. Residue His37 is the Proton donor of the active site. Position 61 (Gln61) interacts with (R)-pantoate. Gln61 lines the beta-alanine pocket. 149–152 (GEKD) serves as a coordination point for ATP. Gln155 serves as a coordination point for (R)-pantoate. Residues Ile178 and 186-189 (LSSR) contribute to the ATP site.

This sequence belongs to the pantothenate synthetase family. In terms of assembly, homodimer.

It localises to the cytoplasm. The enzyme catalyses (R)-pantoate + beta-alanine + ATP = (R)-pantothenate + AMP + diphosphate + H(+). It participates in cofactor biosynthesis; (R)-pantothenate biosynthesis; (R)-pantothenate from (R)-pantoate and beta-alanine: step 1/1. Its function is as follows. Catalyzes the condensation of pantoate with beta-alanine in an ATP-dependent reaction via a pantoyl-adenylate intermediate. This chain is Pantothenate synthetase, found in Salmonella choleraesuis (strain SC-B67).